The following is a 137-amino-acid chain: MNIMITKIFFLVQLFYIVVSKSSAEENCETVASEVHVTKEEYDEMGRLLRSCSGEVSVNKCEGMCNSQVHPSISSPTGFQKECFCCREKFLRERLVTLTHCYDPDGIRFEDEENALMEVRLREPDECECYKCGDFSR.

The signal sequence occupies residues 1–24 (MNIMITKIFFLVQLFYIVVSKSSA). 5 cysteine pairs are disulfide-bonded: cysteine 28–cysteine 86, cysteine 52–cysteine 101, cysteine 61–cysteine 127, cysteine 65–cysteine 129, and cysteine 83–cysteine 132. A CTCK domain is found at 28–123 (CETVASEVHV…NALMEVRLRE (96 aa)).

As to quaternary structure, heterodimer of burs and pburs.

It localises to the secreted. Final heterodimeric neurohormone released at the end of the molting cycle, involved in the sclerotization (tanning) of the insect cuticle, melanization and wing spreading. In Bombyx mori (Silk moth), this protein is Partner of bursicon.